A 91-amino-acid polypeptide reads, in one-letter code: M-myrmeciitoxin-Mb3a (91 aa).

An N-terminal signal peptide occupies residues 1–21 (MKLSCLSLALAIILILAIVHS). A propeptide spanning residues 22–54 (PNMEVKALADPEADAFGEANAFGEADAFAEANA) is cleaved from the precursor.

In terms of assembly, homodimer; disulfide-linked. Expressed by the venom gland and reservoir.

It is found in the secreted. Its function is as follows. Causes a significant and dose-dependent histamine release, probably by influencing the signal transduction of mast cells through a non-IgE-mediated pathway. This peptide does not have cytotoxic activities. This chain is M-myrmeciitoxin-Mb3a, found in Myrmecia banksi (Jack jumper ant).